Here is a 469-residue protein sequence, read N- to C-terminus: 3-isopropylmalate dehydratase large subunit (469 aa).

3 residues coordinate [4Fe-4S] cluster: cysteine 349, cysteine 410, and cysteine 413.

The protein belongs to the aconitase/IPM isomerase family. LeuC type 1 subfamily. In terms of assembly, heterodimer of LeuC and LeuD. [4Fe-4S] cluster serves as cofactor.

The enzyme catalyses (2R,3S)-3-isopropylmalate = (2S)-2-isopropylmalate. Its pathway is amino-acid biosynthesis; L-leucine biosynthesis; L-leucine from 3-methyl-2-oxobutanoate: step 2/4. Functionally, catalyzes the isomerization between 2-isopropylmalate and 3-isopropylmalate, via the formation of 2-isopropylmaleate. The chain is 3-isopropylmalate dehydratase large subunit from Neisseria meningitidis serogroup C (strain 053442).